The sequence spans 451 residues: Phenolic glucoside malonyltransferase 2 (451 aa).

H165 (proton acceptor) is an active-site residue. Residues 165 to 169 (HAVLD) carry the HXXXD motif motif. Residues H270 and 272-273 (ST) each bind malonyl-CoA. D395 acts as the Proton acceptor in catalysis. Residues 395–399 (DFGWG) carry the DFGWG motif motif.

This sequence belongs to the plant acyltransferase family. Phenolic glucoside malonyltransferase subfamily.

It catalyses the reaction a flavonol 7-O-beta-D-glucoside + malonyl-CoA = a flavonol 7-O-(6-O-malonyl-beta-D-glucoside) + CoA. Malonyltransferase acting on xenobiotic glucosides. Has activity toward 2-Naphthol glucoside (2NAG), 1-Naphthol glucoside (1NAG), kaempferol 7-O-glucoside, hydroxycoumarin glucosides and phenol-glucosides, but not toward kaempferol 3-O-glucoside or daidzin. Prefers phenol glucosides rather than naphtol glucosides. In vivo, seems to be involved in the malonylation of 4-methylumbelliferone glucoside or 4-nitrophenyl glucoside while PMAT1 would be involved in the malonylation of 2-Naphthol glucoside. The sequence is that of Phenolic glucoside malonyltransferase 2 (PMAT2) from Arabidopsis thaliana (Mouse-ear cress).